The chain runs to 523 residues: Nitrogenase molybdenum-iron protein beta chain (523 aa).

The [8Fe-7S] cluster site is built by cysteine 70, cysteine 95, cysteine 153, and serine 188.

The protein belongs to the NifD/NifK/NifE/NifN family. As to quaternary structure, tetramer of two alpha and two beta chains. Forms complex with the iron protein (nitrogenase component 2). [8Fe-7S] cluster is required as a cofactor.

The catalysed reaction is N2 + 8 reduced [2Fe-2S]-[ferredoxin] + 16 ATP + 16 H2O = H2 + 8 oxidized [2Fe-2S]-[ferredoxin] + 2 NH4(+) + 16 ADP + 16 phosphate + 6 H(+). With respect to regulation, nitrogenase holoenzyme is subject to 'conformational protection' by FeSII; under oxidizing conditions FeSII binds to the holoenzyme and reversibly protects it from oxidation. This molybdenum-iron protein is part of the nitrogenase complex that catalyzes the key enzymatic reactions in nitrogen fixation. The polypeptide is Nitrogenase molybdenum-iron protein beta chain (nifK) (Azotobacter vinelandii).